A 503-amino-acid chain; its full sequence is Probable cytosol aminopeptidase (503 aa).

The Mn(2+) site is built by K274 and D279. K286 is an active-site residue. 3 residues coordinate Mn(2+): D297, D356, and E358. R360 is a catalytic residue.

It belongs to the peptidase M17 family. The cofactor is Mn(2+).

It is found in the cytoplasm. The catalysed reaction is Release of an N-terminal amino acid, Xaa-|-Yaa-, in which Xaa is preferably Leu, but may be other amino acids including Pro although not Arg or Lys, and Yaa may be Pro. Amino acid amides and methyl esters are also readily hydrolyzed, but rates on arylamides are exceedingly low.. It catalyses the reaction Release of an N-terminal amino acid, preferentially leucine, but not glutamic or aspartic acids.. Functionally, presumably involved in the processing and regular turnover of intracellular proteins. Catalyzes the removal of unsubstituted N-terminal amino acids from various peptides. The protein is Probable cytosol aminopeptidase of Burkholderia orbicola (strain AU 1054).